We begin with the raw amino-acid sequence, 91 residues long: UPF0512 protein E (91 aa).

The segment covering 1 to 25 (MAIFKSISSISNSTSAMGSSNSTSN) has biased composition (low complexity). A disordered region spans residues 1-26 (MAIFKSISSISNSTSAMGSSNSTSNR).

Belongs to the UPF0512 family.

The chain is UPF0512 protein E from Dictyostelium discoideum (Social amoeba).